We begin with the raw amino-acid sequence, 125 residues long: Small ribosomal subunit protein bS6 (125 aa).

The disordered stretch occupies residues 101–125 (PMMKEEKAKNLLAPQSDAAEPTAAA).

The protein belongs to the bacterial ribosomal protein bS6 family.

In terms of biological role, binds together with bS18 to 16S ribosomal RNA. This is Small ribosomal subunit protein bS6 from Laribacter hongkongensis (strain HLHK9).